A 476-amino-acid polypeptide reads, in one-letter code: 3-isopropylmalate dehydratase large subunit (476 aa).

[4Fe-4S] cluster contacts are provided by Cys-347, Cys-407, and Cys-410. Positions 418–442 (LAPGERSASTSNRNFEGRQGKGGRT) are disordered.

This sequence belongs to the aconitase/IPM isomerase family. LeuC type 1 subfamily. Heterodimer of LeuC and LeuD. It depends on [4Fe-4S] cluster as a cofactor.

The catalysed reaction is (2R,3S)-3-isopropylmalate = (2S)-2-isopropylmalate. The protein operates within amino-acid biosynthesis; L-leucine biosynthesis; L-leucine from 3-methyl-2-oxobutanoate: step 2/4. In terms of biological role, catalyzes the isomerization between 2-isopropylmalate and 3-isopropylmalate, via the formation of 2-isopropylmaleate. This chain is 3-isopropylmalate dehydratase large subunit, found in Streptomyces coelicolor (strain ATCC BAA-471 / A3(2) / M145).